A 133-amino-acid polypeptide reads, in one-letter code: Nickel-responsive regulator (133 aa).

Positions 76, 87, 89, and 95 each coordinate Ni(2+).

The protein belongs to the transcriptional regulatory CopG/NikR family. As to quaternary structure, homotetramer. Ni(2+) is required as a cofactor.

Functionally, transcriptional repressor of the nikABCDE operon. Is active in the presence of excessive concentrations of intracellular nickel. In Escherichia coli (strain SE11), this protein is Nickel-responsive regulator.